Consider the following 356-residue polypeptide: tRNA N6-adenosine threonylcarbamoyltransferase (356 aa).

H114 and H118 together coordinate Fe cation. Substrate contacts are provided by residues 136-140 (LVSGG), D169, G182, and N280. A Fe cation-binding site is contributed by D308. Residues 333-356 (ARPRWPLDNSQPALLGSGKKGAKA) form a disordered region.

The protein belongs to the KAE1 / TsaD family. The cofactor is Fe(2+).

It localises to the cytoplasm. It carries out the reaction L-threonylcarbamoyladenylate + adenosine(37) in tRNA = N(6)-L-threonylcarbamoyladenosine(37) in tRNA + AMP + H(+). Functionally, required for the formation of a threonylcarbamoyl group on adenosine at position 37 (t(6)A37) in tRNAs that read codons beginning with adenine. Is involved in the transfer of the threonylcarbamoyl moiety of threonylcarbamoyl-AMP (TC-AMP) to the N6 group of A37, together with TsaE and TsaB. TsaD likely plays a direct catalytic role in this reaction. The chain is tRNA N6-adenosine threonylcarbamoyltransferase from Dinoroseobacter shibae (strain DSM 16493 / NCIMB 14021 / DFL 12).